A 325-amino-acid polypeptide reads, in one-letter code: Elongation factor P--(R)-beta-lysine ligase (325 aa).

Ser76–Glu78 is a binding site for substrate. Residues Arg100 to Glu102 and Asn109 each bind ATP. Tyr118 serves as a coordination point for substrate. ATP is bound at residue Glu244–Leu245. Glu251 serves as a coordination point for substrate. Gly300 provides a ligand contact to ATP.

The protein belongs to the class-II aminoacyl-tRNA synthetase family. EpmA subfamily. As to quaternary structure, homodimer.

It catalyses the reaction D-beta-lysine + L-lysyl-[protein] + ATP = N(6)-((3R)-3,6-diaminohexanoyl)-L-lysyl-[protein] + AMP + diphosphate + H(+). With EpmB is involved in the beta-lysylation step of the post-translational modification of translation elongation factor P (EF-P) on 'Lys-34'. Catalyzes the ATP-dependent activation of (R)-beta-lysine produced by EpmB, forming a lysyl-adenylate, from which the beta-lysyl moiety is then transferred to the epsilon-amino group of EF-P 'Lys-34'. The chain is Elongation factor P--(R)-beta-lysine ligase from Escherichia fergusonii (strain ATCC 35469 / DSM 13698 / CCUG 18766 / IAM 14443 / JCM 21226 / LMG 7866 / NBRC 102419 / NCTC 12128 / CDC 0568-73).